Consider the following 149-residue polypeptide: Extracellular protease inhibitor 1 (149 aa).

Residues 1-16 (MKSALLFTLVVAAVHA) form the signal peptide. Kazal-like domains lie at 29-86 (ESNE…SSTG) and 88-141 (QPPS…ACVG). Cystine bridges form between C35–C65 and C39–C58. N-linked (GlcNAc...) asparagine glycosylation occurs at N67. 3 disulfides stabilise this stretch: C94–C124, C98–C117, and C106–C139.

Interacts with host subtilisin-like protease P69B.

The protein resides in the secreted. Secreted effector that interacts with and inhibits the pathogenesis-related P69B subtilisin-like serine protease of host tomato. Inhibition of host proteases by a pathogen extracellular protease inhibitor forms a specific type of defense-counterdefense mechanism between plants and microbial pathogens. The chain is Extracellular protease inhibitor 1 from Phytophthora infestans (Potato late blight agent).